The following is a 119-amino-acid chain: Ribonuclease P protein component (119 aa).

It belongs to the RnpA family. In terms of assembly, consists of a catalytic RNA component (M1 or rnpB) and a protein subunit.

The catalysed reaction is Endonucleolytic cleavage of RNA, removing 5'-extranucleotides from tRNA precursor.. In terms of biological role, RNaseP catalyzes the removal of the 5'-leader sequence from pre-tRNA to produce the mature 5'-terminus. It can also cleave other RNA substrates such as 4.5S RNA. The protein component plays an auxiliary but essential role in vivo by binding to the 5'-leader sequence and broadening the substrate specificity of the ribozyme. The protein is Ribonuclease P protein component of Histophilus somni (strain 129Pt) (Haemophilus somnus).